A 130-amino-acid polypeptide reads, in one-letter code: Small ribosomal subunit protein uS8 (130 aa).

This sequence belongs to the universal ribosomal protein uS8 family. As to quaternary structure, part of the 30S ribosomal subunit. Contacts proteins S5 and S12.

In terms of biological role, one of the primary rRNA binding proteins, it binds directly to 16S rRNA central domain where it helps coordinate assembly of the platform of the 30S subunit. The protein is Small ribosomal subunit protein uS8 of Glaesserella parasuis serovar 5 (strain SH0165) (Haemophilus parasuis).